A 452-amino-acid chain; its full sequence is Imidazoleglycerol-phosphate dehydratase (452 aa).

A unknown activity region spans residues 1–233 (MASPVQALLL…VGASVVLTPG (233 aa)). The interval 234–452 (LGELLDLVPA…GVPSTKGVLA (219 aa)) is imidazoleglycerol-phosphate dehydratase.

It belongs to the imidazoleglycerol-phosphate dehydratase family.

It carries out the reaction D-erythro-1-(imidazol-4-yl)glycerol 3-phosphate = 3-(imidazol-4-yl)-2-oxopropyl phosphate + H2O. It functions in the pathway amino-acid biosynthesis; L-histidine biosynthesis; L-histidine from 5-phospho-alpha-D-ribose 1-diphosphate: step 6/9. The protein is Imidazoleglycerol-phosphate dehydratase (HIS3) of Phytophthora nicotianae (Potato buckeye rot agent).